The sequence spans 489 residues: Ammonium transporter Rh type C (489 aa).

The Cytoplasmic segment spans residues 1–21 (MGNCADCLRGFFCPPKNTNIR). Residues 22–42 (ISLPAVCFVWQIAMIVLFGVF) form a helical membrane-spanning segment. Residues 43-75 (IRYDAESDIRLWLQLKHTNNITSDIENDFYFRY) lie on the Extracellular side of the membrane. N-linked (GlcNAc...) asparagine glycosylation is present at Asn62. A helical membrane pass occupies residues 76-96 (PSFQDVHVMIFVGFGFLMTFL). Residues 97-100 (KRYS) are Cytoplasmic-facing. Residues 101 to 121 (FGGVGFNFLIGAFGLQWALLM) traverse the membrane as a helical segment. At 122–140 (QGWFHALDPTTGKISIGVE) the chain is on the extracellular side. A helical transmembrane segment spans residues 141 to 161 (GLINADFCVAASLIAYGALLG). Topologically, residues 162–169 (KVSPVQLM) are cytoplasmic. A helical membrane pass occupies residues 170 to 190 (VVTLFGVTLFAVEEYIILNLL). The Extracellular segment spans residues 191–195 (HCRDA). Residues 196–216 (GGSMVIHCFGGYYGLTISWIL) form a helical membrane-spanning segment. Topologically, residues 217–235 (YRPKLHQSKRLNGSVYHSD) are cytoplasmic. A helical transmembrane segment spans residues 236 to 256 (VFAMIGTLFLWMFWPSFNSAI). Over 257-266 (TDHGSGQHRT) the chain is Extracellular. Residues 267 to 287 (AINTYIALASSVLTTVAISSA) form a helical membrane-spanning segment. Residues 288-298 (SEKRGKLDMVH) are Cytoplasmic-facing. A helical transmembrane segment spans residues 299–319 (IQNATLAGGVAMGTAAEFMIT). Position 320 (Pro320) is a topological domain, extracellular. A helical transmembrane segment spans residues 321-341 (YGALIVGFCTGIISTFGYLFV). Residues 342 to 359 (SPFMEKYLKIQDTCGVHN) lie on the Cytoplasmic side of the membrane. A helical membrane pass occupies residues 360-380 (LHAMPGMLGGFIGAIVAAAAT). Topologically, residues 381–412 (EEVYSREGLIETFDFEGKFADRTVGTQGGFQA) are extracellular. Residues 413–433 (AGVCVAIAFAVVGGAVVGLIL) traverse the membrane as a helical segment. Residues 434–489 (RLPIWGDPADDNCFDDEVYWEVPEDEEGILPVLEYNNHMTHKHQDISESNFSVEQS) lie on the Cytoplasmic side of the membrane.

The protein belongs to the ammonium transporter (TC 2.A.49) family. Rh subfamily. Homotrimer.

It is found in the apical cell membrane. Its function is as follows. Functions as an ammonia transporter. May play a role in the elimination of ammonia in the gill. This is Ammonium transporter Rh type C (rhcg) from Gasterosteus aculeatus (Three-spined stickleback).